We begin with the raw amino-acid sequence, 133 residues long: MGPLLGMVGAGAAGSAIGEGLGMLRDKWNRDFQERMSNTQYQRARKDMEAAGINPLAQFGSGQASSPSGGVSGSSFGSNITSMLGSSANMLMQLSKLKEDAERANFGSKTVQTINDARNNMVRSVITLSKRVK.

It belongs to the microviridae H protein family.

It is found in the virion. Functionally, probably triggers with protein G the injection of the phage DNA into the host upon conformational changes induced by virus-host receptor interaction. This is Minor spike protein H from Spiroplasma virus 4 (SpV4).